The sequence spans 1203 residues: DNA-directed RNA polymerase subunit beta' (1203 aa).

The Zn(2+) site is built by Cys60, Cys62, Cys75, and Cys78. Asp449, Asp451, and Asp453 together coordinate Mg(2+). Zn(2+) is bound by residues Cys818, Cys892, Cys899, and Cys902.

Belongs to the RNA polymerase beta' chain family. As to quaternary structure, the RNAP catalytic core consists of 2 alpha, 1 beta, 1 beta' and 1 omega subunit. When a sigma factor is associated with the core the holoenzyme is formed, which can initiate transcription. It depends on Mg(2+) as a cofactor. Zn(2+) serves as cofactor.

The catalysed reaction is RNA(n) + a ribonucleoside 5'-triphosphate = RNA(n+1) + diphosphate. DNA-dependent RNA polymerase catalyzes the transcription of DNA into RNA using the four ribonucleoside triphosphates as substrates. The protein is DNA-directed RNA polymerase subunit beta' of Bacillus cereus (strain ATCC 14579 / DSM 31 / CCUG 7414 / JCM 2152 / NBRC 15305 / NCIMB 9373 / NCTC 2599 / NRRL B-3711).